Here is a 262-residue protein sequence, read N- to C-terminus: Calbindin (262 aa).

Thr-2 carries the N-acetylthreonine modification. 5 consecutive EF-hand domains span residues 12–47, 54–89, 99–134, 143–178, and 187–222; these read ISAAQFFEIWHHYDSDGNGYMDGKELQNFIQELQQA, DLTPEMKAFVDQYGKATDGKIGIVELAQVLPTEENF, KSSEDFMQTWRKYDSDHSGFIDSEELKSFLKDLLQK, KLTEYTEIMLRMFDANNDGKLELTELARLLPVQENF, and MCAKEFNKAFEMYDQDGNGYIDENELDALLKDLCEK. Positions 25, 27, 29, 31, and 36 each coordinate Ca(2+). The Ca(2+) site is built by Asp-112, Asp-114, Ser-116, Glu-123, Asp-156, Asn-158, Asp-160, Lys-162, Glu-167, Asp-200, Asp-202, Asn-204, Tyr-206, and Glu-211.

The protein belongs to the calbindin family. As to expression, highly abundant in supporting cells. Also present in hair cells.

In terms of biological role, buffers cytosolic calcium. May stimulate a membrane Ca(2+)-ATPase and a 3',5'-cyclic nucleotide phosphodiesterase. The sequence is that of Calbindin (CALB1) from Gallus gallus (Chicken).